We begin with the raw amino-acid sequence, 1050 residues long: MEPGRGGTETVGKFEFSRKDLIGHGAFAVVFKGRHREKHDLEVAVKCINKKNLAKSQTLLGKEIKILKELKHENIVALYDFQEMANSVYLVMEYCNGGDLADYLHAMRTLSEDTIRLFLQQIAGAMRLLHSKGIIHRDLKPQNILLSNPAGRRANPNSIRVKIADFGFARYLQSNMMAATLCGSPMYMAPEVIMSQHYDGKADLWSIGTIVYQCLTGKAPFQASSPQDLRLFYEKNKTLVPTIPRETSAPLRQLLLALLQRNHKDRMDFDEFFHHPFLDASPSVRKSPPVPVPSYPSSGSGSSSSSSSTSHLASPPSLGEMQQLQKTLASPADTAGFLHSSRDSGGSKDSSCDTDDFVMVPAQFPGDLVAEAPSAKPPPDSLMCSGSSLVASAGLESHGRTPSPSPPCSSSPSPSGRAGPFSSSRCGASVPIPVPTQVQNYQRIERNLQSPTQFQTPRSSAIRRSGSTSPLGFARASPSPPAHAEHGGVLARKMSLGGGRPYTPSPQVGTIPERPGWSGTPSPQGAEMRGGRSPRPGSSAPEHSPRTSGLGCRLHSAPNLSDLHVVRPKLPKPPTDPLGAVFSPPQASPPQPSHGLQSCRNLRGSPKLPDFLQRNPLPPILGSPTKAVPSFDFPKTPSSQNLLALLARQGVVMTPPRNRTLPDLSEVGPFHGQPLGPGLRPGEDPKGPFGRSFSTSRLTDLLLKAAFGTQAPDPGSTESLQEKPMEIAPSAGFGGSLHPGARAGGTSSPSPVVFTVGSPPSGSTPPQGPRTRMFSAGPTGSASSSARHLVPGPCSEAPAPELPAPGHGCSFADPITANLEGAVTFEAPDLPEETLMEQEHTEILRGLRFTLLFVQHVLEIAALKGSASEAAGGPEYQLQESVVADQISLLSREWGFAEQLVLYLKVAELLSSGLQSAIDQIRAGKLCLSSTVKQVVRRLNELYKASVVSCQGLSLRLQRFFLDKQRLLDRIHSITAERLIFSHAVQMVQSAALDEMFQHREGCVPRYHKALLLLEGLQHMLSDQADIENVTKCKLCIERRLSALLTGICA.

The Protein kinase domain occupies 16–278; it reads FSRKDLIGHG…FDEFFHHPFL (263 aa). Residues 22–30 and K46 each bind ATP; that span reads IGHGAFAVV. The active-site Proton acceptor is D138. K162 is modified (N6-acetyllysine). Disordered regions lie at residues 283 to 358 and 393 to 608; these read SVRK…DDFV and AGLE…SPKL. The segment at 287–416 is interaction with GABARAP and GABARAPL2; it reads SPPVPVPSYP…PCSSSPSPSG (130 aa). Low complexity predominate over residues 295–317; it reads YPSSGSGSSSSSSSTSHLASPPS. Position 317 is a phosphoserine; by AMPK (S317). Position 403 is a phosphoserine (S403). The segment covering 410 to 425 has biased composition (low complexity); that stretch reads SSPSPSGRAGPFSSSR. Residues 436 to 459 are compositionally biased toward polar residues; the sequence is TQVQNYQRIERNLQSPTQFQTPRS. Position 450 is a phosphoserine (S450). Phosphothreonine is present on T456. 5 positions are modified to phosphoserine: S467, S469, S477, S479, and S522. S556 bears the Phosphoserine; by AMPK mark. Phosphothreonine is present on T575. K607 carries the N6-acetyllysine modification. Residue T636 is modified to Phosphothreonine. Phosphoserine is present on residues S638 and S639. Residues 728 to 791 are disordered; the sequence is APSAGFGGSL…ASSSARHLVP (64 aa). S758 is modified (phosphoserine; by MTOR). S775 bears the Phosphoserine mark. A compositionally biased stretch (low complexity) spans 775–786; it reads SAGPTGSASSSA. The tract at residues 828 to 1050 is C-terminal domain; mediates interaction with SESN2; the sequence is PDLPEETLME…LSALLTGICA (223 aa).

It belongs to the protein kinase superfamily. Ser/Thr protein kinase family. APG1/unc-51/ULK1 subfamily. Interacts with GABARAP and GABARAPL2. Interacts (via C-terminus) with ATG13. Part of a complex consisting of ATG13, ATG101, ULK1 and RB1CC1. Associates with the mammalian target of rapamycin complex 1 (mTORC1) through an interaction with RPTOR; the association depends on nutrient conditions and is reduced during starvation. Interacts with FEZ1; SCOC interferes with FEZ1-binding. Interacts with TBC1D14. Interacts (phosphorylated form) with TRIM5. When phosphorylated at Ser-317, interacts with MEFV and BECN1 simultaneously. Interacts with TRIM21 and IRF3, in the presence of TRIM21. Interacts with SESN2. Interacts with SQSTM1. Interacts with C9orf72. Interacts with WDR45. Interacts with ATG13; this interaction is increased in the absence of TMEM39A. Interacts with WIPI2. Interacts with ATP2A2. Interacts with AMBRA1. Interacts with IRGM; promoting the coassembly of ULK1 and BECN1. In terms of processing, autophosphorylated. Phosphorylated under nutrient-rich conditions; dephosphorylated during starvation or following treatment with rapamycin. Under nutrient sufficiency, phosphorylated by MTOR/mTOR, disrupting the interaction with AMPK and preventing activation of ULK1. In response to nutrient limitation, phosphorylated and activated by AMPK, leading to activate autophagy. Post-translationally, ubiquitinated via 'Lys-63'-linkage by a complex composed of AMBRA1 and TRAF6 following autophagy induction, promoting ULK1 stability and kinase activity. Deubiquitinated by USP20; leading to ULK1 stability and autophagy initiation. Acetylated by KAT5/TIP60 under autophagy induction, promoting protein kinase activity. Ubiquitously expressed. Detected in the following adult tissues: skeletal muscle, heart, pancreas, brain, placenta, liver, kidney, and lung.

It is found in the cytoplasm. The protein resides in the cytosol. Its subcellular location is the preautophagosomal structure. It catalyses the reaction L-seryl-[protein] + ATP = O-phospho-L-seryl-[protein] + ADP + H(+). The catalysed reaction is L-threonyl-[protein] + ATP = O-phospho-L-threonyl-[protein] + ADP + H(+). Its activity is regulated as follows. Acetylation by KAT5/TIP60 stimulates the protein kinase activity. The protein kinase activity is activated by unanchored 'Lys-63'-linked polyubiquitin chains: unanchored 'Lys-63'-linked polyubiquitin chains are catalyzed by TRIM32 in an AMBRA1-dependent manner. Its function is as follows. Serine/threonine-protein kinase involved in autophagy in response to starvation. Acts upstream of phosphatidylinositol 3-kinase PIK3C3 to regulate the formation of autophagophores, the precursors of autophagosomes. Part of regulatory feedback loops in autophagy: acts both as a downstream effector and negative regulator of mammalian target of rapamycin complex 1 (mTORC1) via interaction with RPTOR. Activated via phosphorylation by AMPK and also acts as a regulator of AMPK by mediating phosphorylation of AMPK subunits PRKAA1, PRKAB2 and PRKAG1, leading to negatively regulate AMPK activity. May phosphorylate ATG13/KIAA0652 and RPTOR; however such data need additional evidences. Plays a role early in neuronal differentiation and is required for granule cell axon formation. Also phosphorylates SESN2 and SQSTM1 to regulate autophagy. Phosphorylates FLCN, promoting autophagy. Phosphorylates AMBRA1 in response to autophagy induction, releasing AMBRA1 from the cytoskeletal docking site to induce autophagosome nucleation. Phosphorylates ATG4B, leading to inhibit autophagy by decreasing both proteolytic activation and delipidation activities of ATG4B. The polypeptide is Serine/threonine-protein kinase ULK1 (Homo sapiens (Human)).